Reading from the N-terminus, the 602-residue chain is MPYAGNLPTPTENKVSQIISIISAYRHRSAAVPDRFSEFAPALEKQLTETVSKGEPVRFILPSFPFKAPAEGDKRKTLGSLPDKAEEIALQTLDAFADSIAEIHQPGATVVIVSDASVYGDLLKIPDADAFAYHQELKKLAASLGLTHLEFVRPGTLAGIVPEEAKTLEEYSDHVSKTRNLLDGTLAQAVDPNEDENMRATSKHYDTALPQAEDHEAFKAAMLKRGKAYAKLIASSAESTIRLSIHESNNVGKITMNLFPPPTSPDFITPWHGAVAVLADASVRIVDASTVDRDRFEVITNHEGRPWLLREKSDLFDWFGMELDFEPLFPCGMQVRPKEGYGPYRFEDVNMKLVRRLALSTAPLLLRGFTMQVEKEVFRSKARELGEIQMWPFGDILEVRENADFNMNNVLTREAMPFHYDGVFKTVQDEKTGEWISVPPLFQMFRNRAASQSKGGLTLFASSRNLIPLLGPDSIPLEELRKLQWETFTAANEAFGGHKLQLPFIITHPESGVDTFRFHEPWPESKCVPGSSEPTLVRVVGWPLAESDALCEKLTRLLYDRRVAYRHQWKAGDFIFNDNAMTHHTRTAFEDGHREHWRVHVN.

It belongs to the isocyanide synthase family.

In terms of biological role, isocyanide synthase involved in the biosynthesis of isocyanides (or isonitriles), a class of microbial secondary metabolites. The presence of an isonitrile moiety within a compound imparts unique biological (cytotoxic, antibacterial, and antiprotozoal) and chemical (transition metal coordination) properties and enables synthetic and biochemical applications. This Aspergillus fumigatus (strain ATCC MYA-4609 / CBS 101355 / FGSC A1100 / Af293) (Neosartorya fumigata) protein is Isocyanide synthase A.